We begin with the raw amino-acid sequence, 249 residues long: Proteasome subunit alpha type-7 (249 aa).

This sequence belongs to the peptidase T1A family. As to quaternary structure, the 26S proteasome consists of a 20S proteasome core and two 19S regulatory subunits. The 20S proteasome core is composed of 28 subunits that are arranged in four stacked rings, resulting in a barrel-shaped structure. The two end rings are each formed by seven alpha subunits, and the two central rings are each formed by seven beta subunits. The catalytic chamber with the active sites is on the inside of the barrel.

The protein resides in the cytoplasm. It localises to the nucleus. The proteasome is a multicatalytic proteinase complex which is characterized by its ability to cleave peptides with Arg, Phe, Tyr, Leu, and Glu adjacent to the leaving group at neutral or slightly basic pH. The proteasome has an ATP-dependent proteolytic activity. The protein is Proteasome subunit alpha type-7 (PAD1) of Cicer arietinum (Chickpea).